The chain runs to 177 residues: Matrix protein (177 aa).

Homomultimer. Interacts with nucleoprotein and with the cytoplasmic domain of glycoprotein.

The protein localises to the virion membrane. It localises to the host endomembrane system. In terms of biological role, plays a major role in assembly and budding of virion. Completely covers the ribonucleoprotein coil and keep it in condensed bullet-shaped form. Inhibits viral transcription and stimulates replication. The sequence is that of Matrix protein (M) from Lettuce necrotic yellows virus (isolate 318) (LNYV).